Consider the following 159-residue polypeptide: Phosphopantetheine adenylyltransferase (159 aa).

Thr10 serves as a coordination point for substrate. Residues Thr10–Phe11 and His18 contribute to the ATP site. Positions 42, 74, and 88 each coordinate substrate. Residues Gly89–Arg91, Glu99, and Trp124–Ser130 contribute to the ATP site.

Belongs to the bacterial CoaD family. As to quaternary structure, homohexamer. It depends on Mg(2+) as a cofactor.

It is found in the cytoplasm. It carries out the reaction (R)-4'-phosphopantetheine + ATP + H(+) = 3'-dephospho-CoA + diphosphate. It functions in the pathway cofactor biosynthesis; coenzyme A biosynthesis; CoA from (R)-pantothenate: step 4/5. Functionally, reversibly transfers an adenylyl group from ATP to 4'-phosphopantetheine, yielding dephospho-CoA (dPCoA) and pyrophosphate. The chain is Phosphopantetheine adenylyltransferase from Yersinia pestis.